Consider the following 71-residue polypeptide: ATP synthase F(0) complex subunit e, mitochondrial (71 aa).

Position 34 is an N6-acetyllysine (Lys-34).

The protein belongs to the ATPase e subunit family. Component of the ATP synthase complex composed at least of ATP5F1A/subunit alpha, ATP5F1B/subunit beta, ATP5MC1/subunit c (homooctomer), MT-ATP6/subunit a, MT-ATP8/subunit 8, ATP5ME/subunit e, ATP5MF/subunit f, ATP5MG/subunit g, ATP5MK/subunit k, ATP5MJ/subunit j, ATP5F1C/subunit gamma, ATP5F1D/subunit delta, ATP5F1E/subunit epsilon, ATP5PF/subunit F6, ATP5PB/subunit b, ATP5PD/subunit d, ATP5PO/subunit OSCP. ATP synthase complex consists of a soluble F(1) head domain (subunits alpha(3) and beta(3)) - the catalytic core - and a membrane F(0) domain - the membrane proton channel (subunits c, a, 8, e, f, g, k and j). These two domains are linked by a central stalk (subunits gamma, delta, and epsilon) rotating inside the F1 region and a stationary peripheral stalk (subunits F6, b, d, and OSCP).

The protein resides in the mitochondrion. Its subcellular location is the mitochondrion inner membrane. Subunit e, of the mitochondrial membrane ATP synthase complex (F(1)F(0) ATP synthase or Complex V) that produces ATP from ADP in the presence of a proton gradient across the membrane which is generated by electron transport complexes of the respiratory chain. ATP synthase complex consist of a soluble F(1) head domain - the catalytic core - and a membrane F(1) domain - the membrane proton channel. These two domains are linked by a central stalk rotating inside the F(1) region and a stationary peripheral stalk. During catalysis, ATP synthesis in the catalytic domain of F(1) is coupled via a rotary mechanism of the central stalk subunits to proton translocation. In vivo, can only synthesize ATP although its ATP hydrolase activity can be activated artificially in vitro. Part of the complex F(0) domain. The polypeptide is ATP synthase F(0) complex subunit e, mitochondrial (Bos taurus (Bovine)).